Consider the following 445-residue polypeptide: Exodeoxyribonuclease 7 large subunit (445 aa).

It belongs to the XseA family. Heterooligomer composed of large and small subunits.

The protein resides in the cytoplasm. It carries out the reaction Exonucleolytic cleavage in either 5'- to 3'- or 3'- to 5'-direction to yield nucleoside 5'-phosphates.. Its function is as follows. Bidirectionally degrades single-stranded DNA into large acid-insoluble oligonucleotides, which are then degraded further into small acid-soluble oligonucleotides. The sequence is that of Exodeoxyribonuclease 7 large subunit from Staphylococcus aureus (strain bovine RF122 / ET3-1).